The chain runs to 337 residues: MANKNYQMSTGVTAVVQKVVEACQDESKRLDLIEIARSYPPNQLRNMQRTFQAITGTFLDAFLKKHLSKDFESLVLMLYKPRAQLLCELIRGATKGAGTDEKCLVDVLLTIETHEVREIRQLYYQLYNDSLGDVVRKDCGDKYMWAKLINAVATGDRIPRDTHELEEDLVLVRKAIETKGVKKDEVSTWIRIFATYTRADFRQLHKMYSAKYNGDSLRAGVEDEFQGLDEYAFKLAHDFLYDPCCAAAFSMNVAFAGSGSDSNRLNRITAMHFRECKGCKYYYKKVYGQAFDERCATELKGVYGDAIKLLWEPVTVPLLSMDDYQGSEQHRPMTLEL.

Annexin repeat units lie at residues 10 to 80, 81 to 154, 161 to 238, and 242 to 312; these read TGVT…MLYK, PRAQ…AVAT, DTHE…LAHD, and DPCC…LLWE.

Belongs to the annexin family.

It localises to the cell projection. It is found in the cilium. The protein localises to the flagellum. Its function is as follows. May function as a calcium-regulated structural element linking phospholipid bilayer and underlying axoneme. This is Annexin E1 (ANXE1) from Giardia intestinalis (Giardia lamblia).